The following is a 66-amino-acid chain: MILVNVHAGNCDNTLKNFKKRLQRELYFRKMKEQRYYETPSAKRVRKAQEAARRQRKFARKKMFDE.

The protein belongs to the bacterial ribosomal protein bS21 family.

The chain is Small ribosomal subunit protein bS21 from Rickettsia felis (strain ATCC VR-1525 / URRWXCal2) (Rickettsia azadi).